The primary structure comprises 374 residues: MVNQAAMPLLTPYKQAGGKIDLSHRVLLSPMTRCRSYGNVPQPHAALYYTQRATSGGLLITEATGVSDTAQGYPETPGVWTREHVEAWKPIVDAVHRKGALFICQLWHVGRVSTNDYQPNGQAPISSSDIQITPDGSGIVYSKPRRLRVDEIPQIVDDFRLAARNAIEAGFDGVEIHGANGYLLEQFMKDSSNDRTDEYGGSLENRCRFAVEVIDAVVGEIGAHRVGIRLSPFLDFMDCVDSDPEALGSYMVEQLNKHEGFLYCHMVEPRMAIVDGRRQIQHGLLPFRKAFKGTFIAAGGYDREEGNKVIENGYTDLVSFGRLFLANPDLPKRFELDAPLNKYDRNTFYTQDPIVGYTDYPFLDEDQNNSVADA.

FMN is bound by residues 30-32 (PMT), A63, and Q105. Substrate is bound at residue 177-180 (HGAN). Y182 serves as the catalytic Proton donor. Position 229 (R229) interacts with FMN. R270 is a substrate binding site. FMN contacts are provided by residues G300 and 321–322 (GR).

The protein belongs to the NADH:flavin oxidoreductase/NADH oxidase family. The cofactor is FMN.

Its function is as follows. Putative oxophytodienoate reductase that may be involved in the biosynthesis or metabolism of oxylipin signaling molecules. The sequence is that of Putative 12-oxophytodienoate reductase 5 (OPR5) from Oryza sativa subsp. japonica (Rice).